Consider the following 540-residue polypeptide: Dynein axonemal assembly factor 3 homolog (540 aa).

The segment at 480-499 (AVTEAMPESTFKYDTDTDYG) is disordered.

Belongs to the DNAAF3 family. As to expression, expressed in mechanosensory chordotonal (Ch) neurons, spermatocytes and spermatids (at protein level).

It is found in the cytoplasm. The protein localises to the dynein axonemal particle. Its function is as follows. Required for the assembly of axonemal inner and outer dynein arms. Involved in the cytoplasmic preassembly of dyneins into complexes before their transport into cilia. Essential for the development of axonemal dynein motors in the sensory cilium of mechanosensory chordotonal (Ch) neurons and sperm flagellum, and consequently, is required for the mechanotransduction process of hearing and sperm mobility. This chain is Dynein axonemal assembly factor 3 homolog, found in Drosophila melanogaster (Fruit fly).